Reading from the N-terminus, the 310-residue chain is Ninja-family protein 3 (310 aa).

3 disordered regions span residues 1–29 (MASRDFLGRFGGEKGASSDKAGGGAGEPD), 68–140 (SLPG…DDAQ), and 156–215 (DQGN…EQPP). A compositionally biased stretch (basic and acidic residues) spans 99–108 (ERWRRREMQS). 2 stretches are compositionally biased toward polar residues: residues 156 to 166 (DQGNASSSMPE) and 176 to 193 (KSTSSMEISSDNNNQNKS).

This sequence belongs to the Ninja family.

The protein resides in the nucleus. The protein is Ninja-family protein 3 (AFP-D1) of Triticum aestivum (Wheat).